We begin with the raw amino-acid sequence, 274 residues long: NH(3)-dependent NAD(+) synthetase (274 aa).

46–53 (GISGGQDS) lines the ATP pocket. Mg(2+) is bound at residue aspartate 52. Deamido-NAD(+) is bound at residue arginine 140. Threonine 160 serves as a coordination point for ATP. Residue glutamate 165 coordinates Mg(2+). Deamido-NAD(+)-binding residues include lysine 173 and aspartate 180. Positions 189 and 211 each coordinate ATP. A deamido-NAD(+)-binding site is contributed by 260–261 (HK).

The protein belongs to the NAD synthetase family. In terms of assembly, homodimer.

The catalysed reaction is deamido-NAD(+) + NH4(+) + ATP = AMP + diphosphate + NAD(+) + H(+). Its pathway is cofactor biosynthesis; NAD(+) biosynthesis; NAD(+) from deamido-NAD(+) (ammonia route): step 1/1. In terms of biological role, catalyzes the ATP-dependent amidation of deamido-NAD to form NAD. Uses ammonia as a nitrogen source. The chain is NH(3)-dependent NAD(+) synthetase from Listeria innocua serovar 6a (strain ATCC BAA-680 / CLIP 11262).